Consider the following 151-residue polypeptide: Differentiation-associated protein 2 (151 aa).

The N-terminal stretch at 1–22 (MKQIIRLITTLLLLSLIGITCA) is a signal peptide.

It localises to the endoplasmic reticulum. Its subcellular location is the vacuole. Functionally, has an essential role in the initiation of differentiation. Also required for cAMP signaling. This chain is Differentiation-associated protein 2 (dia2), found in Dictyostelium discoideum (Social amoeba).